The chain runs to 207 residues: Large ribosomal subunit protein uL3 (207 aa).

A disordered region spans residues glycine 119–arginine 143.

The protein belongs to the universal ribosomal protein uL3 family. In terms of assembly, part of the 50S ribosomal subunit. Forms a cluster with proteins L14 and L19.

In terms of biological role, one of the primary rRNA binding proteins, it binds directly near the 3'-end of the 23S rRNA, where it nucleates assembly of the 50S subunit. The chain is Large ribosomal subunit protein uL3 from Ligilactobacillus salivarius (strain UCC118) (Lactobacillus salivarius).